A 3084-amino-acid polypeptide reads, in one-letter code: Protein prune homolog 2 (3084 aa).

Met-1 is subject to N-acetylmethionine. The DHH motif motif lies at 109 to 111 (GSH). 18 disordered regions span residues 394-417 (QPSS…QADG), 430-465 (TIRS…PGFD), 500-536 (ASEQ…PKGL), 672-733 (EQES…QKEE), 811-837 (KNTW…MGQS), 861-907 (EIWG…KATG), 947-1080 (SASN…DDPS), 1224-1316 (NMPS…GQSE), 1338-1395 (SGVN…LEVE), 1502-1543 (MNST…DLHD), 1600-1652 (GFGK…TTKR), 1776-1799 (ETGT…DPDK), 1836-1886 (GELE…GDKS), 1961-1980 (DENG…QENQ), 2071-2196 (ILTH…NPEV), 2410-2782 (MLLS…SHPR), 2797-2816 (QSEG…EIDI), and 2825-2859 (DEAD…AEEE). Over residues 501-511 (SEQSQPSSHSA) the composition is skewed to polar residues. Basic and acidic residues-rich tracts occupy residues 682–696 (PWKD…RRTS) and 723–733 (GNKEAQDQKEE). Composition is skewed to polar residues over residues 811–828 (KNTW…SGQE) and 865–891 (KNNS…NNSK). Over residues 962–975 (TNYSTSDSYTSPTY) the composition is skewed to low complexity. Over residues 977–999 (GDEKEIANKPVDKDNGFEAKDAE) the composition is skewed to basic and acidic residues. The segment covering 1009–1019 (ATSSQQSQRNR) has biased composition (polar residues). Residues 1034-1063 (HTEDKPEGNDAHHPDSDALKTEHAEDKNAS) show a composition bias toward basic and acidic residues. Low complexity predominate over residues 1071–1080 (SSPSSYDDPS). Over residues 1248 to 1261 (SPRHSNGKDSHMLE) the composition is skewed to basic and acidic residues. A compositionally biased stretch (polar residues) spans 1265–1294 (LSESGGLTSQPVNQDTWGDSQGDTASSVTG). Residues 1350–1366 (KPRDQEFSSSDAFEHQD) show a composition bias toward basic and acidic residues. Over residues 1368–1378 (SSASGKISSLS) the composition is skewed to low complexity. Composition is skewed to polar residues over residues 1779 to 1792 (TMDT…STEA), 1854 to 1869 (PIQN…STNP), and 1965 to 1980 (CVST…QENQ). Basic and acidic residues predominate over residues 2089 to 2103 (VCHDSEGEQKMEKHT). A compositionally biased stretch (low complexity) spans 2162-2174 (SSKPASSRSSPEP). Composition is skewed to basic and acidic residues over residues 2416–2428 (PDHR…ETNI), 2506–2525 (KQTE…EDHQ), and 2535–2553 (SHEK…RENI). The span at 2569-2584 (PETQLSGTPDTCQSEF) shows a compositional bias: polar residues. Residues 2595-2606 (RMSSSSNHESAS) show a composition bias toward low complexity. Polar residues predominate over residues 2607–2617 (LENPAQDQSWM). The segment covering 2653–2664 (KGPKSQVLERNK) has biased composition (basic and acidic residues). A compositionally biased stretch (acidic residues) spans 2806–2816 (DNLDSPDEIDI). Residues 2840–2849 (ANKSSGQESE) are compositionally biased toward polar residues. Residues 2879 to 3040 (DMKVIEPYRR…SIIKYDEEKS (162 aa)) form the CRAL-TRIO domain.

It belongs to the PPase class C family. Prune subfamily.

The protein localises to the cytoplasm. May play an important role in regulating differentiation, survival and aggressiveness of the tumor cells. The sequence is that of Protein prune homolog 2 (Prune2) from Mus musculus (Mouse).